The sequence spans 232 residues: Ornithine carbamoyltransferase (232 aa).

Carbamoyl phosphate-binding positions include Gln15, Arg39, and 66–69 (HPTQ). L-ornithine-binding positions include Asn99, Asp163, and 167-168 (SM). Carbamoyl phosphate contacts are provided by residues 204 to 207 (HCLP) and Thr232.

It belongs to the aspartate/ornithine carbamoyltransferase superfamily. OTCase family.

It localises to the cytoplasm. It carries out the reaction carbamoyl phosphate + L-ornithine = L-citrulline + phosphate + H(+). It functions in the pathway amino-acid biosynthesis; L-arginine biosynthesis; L-arginine from L-ornithine and carbamoyl phosphate: step 1/3. This Neisseria animalis protein is Ornithine carbamoyltransferase (argF).